The chain runs to 447 residues: MREIVHLQTGQCGNQIGAAFWQTISGEHGLDSNGVYNGSSELQLERMSVYFNEASGNKYVPRAVLVDLEPGTMDAVRAGPFGQLFRPDNFVFGQSGAGNNWAKGHYTEGAELVDNVLDVVRREAEGCDCLQGFQITHSLGGGTGAGMGTLLISKIREEFPDRMMATFSVVPSPKVSDTVVEPYNATLSVHQLVEHSDETFCIDNEALYDICMRTLKLSNPSYGDLNYLVSAVMSGVTTCLRFPGQLNSDLRKLAVNMVPFPRLHFFMVGFAPLTSRGAHSFRAVSVPELTQQMFDPKNMMAASDFRNGRYLTCSAIFRGKVAMKEVEDQMRNVQSKNSSYFVEWIPNNIQTALCAIPPRGLKMSSTFIGNSTSIQELFKRVGDQFTAMFRRKAFLHWYTGEGMDEMEFTEAESNMNDLVSEYQQYQDAGIDEEEEEYEEELPLEGEE.

The GTP site is built by Q11, E69, S138, G142, T143, G144, N204, and N226. E69 is a binding site for Mg(2+). The disordered stretch occupies residues 427–447 (DAGIDEEEEEYEEELPLEGEE). Residues 429–447 (GIDEEEEEYEEELPLEGEE) show a composition bias toward acidic residues.

This sequence belongs to the tubulin family. In terms of assembly, dimer of alpha and beta chains. A typical microtubule is a hollow water-filled tube with an outer diameter of 25 nm and an inner diameter of 15 nM. Alpha-beta heterodimers associate head-to-tail to form protofilaments running lengthwise along the microtubule wall with the beta-tubulin subunit facing the microtubule plus end conferring a structural polarity. Microtubules usually have 13 protofilaments but different protofilament numbers can be found in some organisms and specialized cells. Requires Mg(2+) as cofactor.

It is found in the cytoplasm. The protein localises to the cytoskeleton. Tubulin is the major constituent of microtubules, a cylinder consisting of laterally associated linear protofilaments composed of alpha- and beta-tubulin heterodimers. Microtubules grow by the addition of GTP-tubulin dimers to the microtubule end, where a stabilizing cap forms. Below the cap, tubulin dimers are in GDP-bound state, owing to GTPase activity of alpha-tubulin. The chain is Tubulin beta chain (TUB2) from Hapsidospora chrysogena (Acremonium chrysogenum).